A 153-amino-acid polypeptide reads, in one-letter code: Small ribosomal subunit protein bS16 (153 aa).

The segment at 114–153 is disordered; it reads ENEPVGEAITPKKKKAKAEDAEAAADAPAEAAAESEAADK. Over residues 137 to 153 the composition is skewed to low complexity; the sequence is AADAPAEAAAESEAADK.

Belongs to the bacterial ribosomal protein bS16 family.

This chain is Small ribosomal subunit protein bS16, found in Rhodococcus opacus (strain B4).